The following is a 140-amino-acid chain: Transmembrane protein 107 (140 aa).

The next 2 helical transmembrane spans lie at 7–27 (LVPSRFLTLLAHLVVVITLFW) and 53–73 (LVAALSVTLGLFAVELAGFLS). N79 is a glycosylation site (N-linked (GlcNAc...) asparagine). 2 helical membrane-spanning segments follow: residues 83–103 (SLISIGAHCSASVALSFFIFE) and 113–133 (IFVFCSALPAVTEMALFVTVF).

Part of the tectonic-like complex (also named B9 complex). Interacts with TMEM237, TMEM231, MKS1 and TMEM216.

Its subcellular location is the membrane. The protein localises to the cell projection. The protein resides in the cilium. Functionally, plays a role in cilia formation and embryonic patterning. Requires for normal Sonic hedgehog (Shh) signaling in the neural tube and acts in combination with GLI2 and GLI3 to pattern ventral and intermediate neuronal cell types. During ciliogenesis regulates the ciliary transition zone localization of some MKS complex proteins. This Homo sapiens (Human) protein is Transmembrane protein 107.